Consider the following 514-residue polypeptide: Probable E3 ubiquitin-protein ligase ARI10 (514 aa).

Positions 1–18 (MDYSDDDMIDNESGEENN) are enriched in acidic residues. The disordered stretch occupies residues 1-26 (MDYSDDDMIDNESGEENNSDGGGNES). The interval 117 to 322 (VDIQCGICFE…SDHYACNNYV (206 aa)) is TRIAD supradomain. Zn(2+) is bound by residues cysteine 121, cysteine 124, cysteine 138, histidine 140, cysteine 143, cysteine 146, cysteine 166, cysteine 171, cysteine 210, cysteine 215, cysteine 231, cysteine 233, cysteine 238, cysteine 241, histidine 246, cysteine 251, cysteine 278, and cysteine 281. Residues 121-171 (CGICFESYTRKEIASVSCGHPYCKTCWTGYITTKIEDGPGCLRVKCPEPSC) form an RING-type 1 zinc finger. An IBR-type zinc finger spans residues 190–251 (DKYYRYFLRS…SEDAHSPVDC (62 aa)). Residues 278–308 (CPKCKRPIEKSHGCNHMTCSASCGHRFCWIC) form an RING-type 2; atypical zinc finger. Residue cysteine 291 is part of the active site. Zn(2+)-binding residues include cysteine 296, cysteine 300, cysteine 305, cysteine 308, histidine 315, and cysteine 318.

This sequence belongs to the RBR family. Ariadne subfamily. Zn(2+) is required as a cofactor.

It carries out the reaction [E2 ubiquitin-conjugating enzyme]-S-ubiquitinyl-L-cysteine + [acceptor protein]-L-lysine = [E2 ubiquitin-conjugating enzyme]-L-cysteine + [acceptor protein]-N(6)-ubiquitinyl-L-lysine.. Its pathway is protein modification; protein ubiquitination. Functionally, might act as an E3 ubiquitin-protein ligase, or as part of E3 complex, which accepts ubiquitin from specific E2 ubiquitin-conjugating enzymes and then transfers it to substrates. The polypeptide is Probable E3 ubiquitin-protein ligase ARI10 (ARI10) (Arabidopsis thaliana (Mouse-ear cress)).